A 67-amino-acid chain; its full sequence is Cell division protein ZapB (67 aa).

The stretch at 3-59 forms a coiled coil; the sequence is LELLSKLETKIQAALETIELLKMELEEEKQTSSSLSEQNQQLQQELTSWNEKVTGLV.

It belongs to the ZapB family. As to quaternary structure, homodimer. The ends of the coiled-coil dimer bind to each other, forming polymers. Interacts with FtsZ.

The protein localises to the cytoplasm. Functionally, non-essential, abundant cell division factor that is required for proper Z-ring formation. It is recruited early to the divisome by direct interaction with FtsZ, stimulating Z-ring assembly and thereby promoting cell division earlier in the cell cycle. Its recruitment to the Z-ring requires functional FtsA or ZipA. This Shewanella halifaxensis (strain HAW-EB4) protein is Cell division protein ZapB.